The primary structure comprises 650 residues: L-aspartate N-monooxygenase (nitrosuccinate-forming) (650 aa).

It belongs to the nitrosuccinic acid synthase family. FAD serves as cofactor.

It carries out the reaction L-aspartate + 3 NADPH + 3 O2 + 2 H(+) = 2-nitrobutanedioate + 3 NADP(+) + 4 H2O. Its function is as follows. Involved in the biosynthesis of desferrioxamine derivatives which have iron-binding properties and may act as siderophores. Catalyzes the iterative oxidation of L-aspartic acid to nitrosuccinic acid (2-nitrobutanedioate) via N-hydroxyaspartic acid and nitrososuccinic acid. The sequence is that of L-aspartate N-monooxygenase (nitrosuccinate-forming) from Streptomyces davaonensis (strain DSM 101723 / JCM 4913 / KCC S-0913 / 768).